The chain runs to 122 residues: Large ribosomal subunit protein uL14 (122 aa).

It belongs to the universal ribosomal protein uL14 family. In terms of assembly, part of the 50S ribosomal subunit. Forms a cluster with proteins L3 and L19. In the 70S ribosome, L14 and L19 interact and together make contacts with the 16S rRNA in bridges B5 and B8.

Functionally, binds to 23S rRNA. Forms part of two intersubunit bridges in the 70S ribosome. The protein is Large ribosomal subunit protein uL14 of Chlorobium phaeovibrioides (strain DSM 265 / 1930) (Prosthecochloris vibrioformis (strain DSM 265)).